A 274-amino-acid polypeptide reads, in one-letter code: Protein LNK4 (274 aa).

Positions 209-249 (NSQQKSDSNSDEFLEDRTRETEFETKLNRQSRGQSHIQQDG) are disordered. Positions 223–235 (EDRTRETEFETKL) are enriched in basic and acidic residues. Over residues 236–249 (NRQSRGQSHIQQDG) the composition is skewed to polar residues.

Interacts with REV8.

In terms of biological role, probable transcriptional coactivator. This is Protein LNK4 from Arabidopsis thaliana (Mouse-ear cress).